Reading from the N-terminus, the 137-residue chain is Cellular retinoic acid-binding protein 1 (137 aa).

The Nuclear localization signal signature appears at 21-31 (KALGVNAMLRK). All-trans-retinoate is bound at residue 132–134 (RIY).

Belongs to the calycin superfamily. Fatty-acid binding protein (FABP) family.

The protein resides in the cytoplasm. Cytosolic CRABPs may regulate the access of retinoic acid to the nuclear retinoic acid receptors. In Gallus gallus (Chicken), this protein is Cellular retinoic acid-binding protein 1 (CRABP1).